Reading from the N-terminus, the 300-residue chain is MAGIPEVVAMDCEMVGLGPQRVSGLARCSIVNIHGAVLYDKYIRPEGEITDYRTQVSGVTPQHMVRATPFGEARLEILQLLKGKLVVGHDLKHDFNALKEDMSKYTIYDTSTDRLLWHEAKLQYYSRVSLRLLCKRLLHKNIQVLPGSLLGVGGCILPGTDILHLLLYVGMVRIADLRLLTPFLPPSCLACPLLPESLASARSHAVISALSSSSHLLTPLPNPSQGPQGHVDRLSGQLQDWGGSPLAPALPVSAEQLAGPLLCGRCQGHNGALQNLSATQSPARAALPWDVRLNFILIQG.

Mn(2+) contacts are provided by D11, E13, D90, and H93.

It belongs to the exonuclease superfamily. In terms of assembly, associates with PML and SP100 in the PML NB complex. Associates with survival motor neuron protein (SMN)-containing macromolecular nuclear complexes and U1 and U2 snRNAs and U3 snoRNA. The cofactor is Mn(2+).

Its subcellular location is the nucleus. The protein localises to the nucleolus. It is found in the cytoplasm. The protein resides in the cajal body. It localises to the P-body. It carries out the reaction Exonucleolytic cleavage in the 3'- to 5'-direction to yield nucleoside 5'-phosphates.. Interferon-induced antiviral exoribonuclease that acts mainly on single-stranded RNA. Inhibition of several viruses does not involve the degradation of viral RNAs, but rather the inhibition of translation of viral proteins. Exerts a translational control over a large panel of non-self RNA substrates while sparing endogenous transcripts. This activity correlates with the protein's ability to localize in cytoplasmic processing bodies. May also act as master regulator of over hundred interferon stimulated genes leading to viral genome translation inhibition. May play additional roles in the maturation of snRNAs and rRNAs, and in ribosome biogenesis. In Mus musculus (Mouse), this protein is Interferon-stimulated gene 20 kDa protein (Isg20).